We begin with the raw amino-acid sequence, 433 residues long: Putative tartrate transporter (433 aa).

11 consecutive transmembrane segments (helical) span residues 17–37, 47–67, 82–102, 113–133, 139–159, 177–197, 242–262, 275–295, 314–334, 350–370, and 395–415; these read IVPFIMLLYFVAFLDRVNIGF, GFSSTVFGIGAGIFFVGYFLF, IWIARVMITWGIVSGLMAFVQ, LLGVAEAGFFPGIILYLSFWF, AAVTAIFMAAAPLSTVLGSPI, WMFLIEAAPAVILGVVVLFYL, VIALALVYFGTSAGLYTLGIW, LQVGFINAVPGIFAVAAMVLW, LLAAVGLAFATGATSVFTVLI, LWSMPTLFLSGPAAAAGIATI, and FAGGLYFVAGLLVVSAIVTLV.

Belongs to the major facilitator superfamily. Phthalate permease family.

The protein localises to the cell membrane. Functionally, component of the tartrate utilization system and may allow entry of tartrate and tartrate dehydrogenase. The protein is Putative tartrate transporter (ttuB) of Agrobacterium vitis (Rhizobium vitis).